A 156-amino-acid polypeptide reads, in one-letter code: Ribosomal RNA large subunit methyltransferase H (156 aa).

S-adenosyl-L-methionine-binding positions include L73, G104, and 123–128 (LSALTL).

Belongs to the RNA methyltransferase RlmH family. As to quaternary structure, homodimer.

It localises to the cytoplasm. It catalyses the reaction pseudouridine(1915) in 23S rRNA + S-adenosyl-L-methionine = N(3)-methylpseudouridine(1915) in 23S rRNA + S-adenosyl-L-homocysteine + H(+). Its function is as follows. Specifically methylates the pseudouridine at position 1915 (m3Psi1915) in 23S rRNA. The sequence is that of Ribosomal RNA large subunit methyltransferase H from Vibrio vulnificus (strain CMCP6).